The sequence spans 534 residues: CTP synthase (534 aa).

Residues 1 to 267 are amidoligase domain; it reads MTKYIFVTGG…DQIVCDHLKL (267 aa). Position 13 (Ser-13) interacts with CTP. Ser-13 provides a ligand contact to UTP. 14-19 contacts ATP; the sequence is SIGKGI. Position 54 (Tyr-54) interacts with L-glutamine. Asp-71 is an ATP binding site. 2 residues coordinate Mg(2+): Asp-71 and Glu-141. CTP contacts are provided by residues 148–150, 188–193, and Lys-224; these read DIE and KTKPTQ. UTP is bound by residues 188-193 and Lys-224; that span reads KTKPTQ. 240 to 242 serves as a coordination point for ATP; that stretch reads RDV. The 243-residue stretch at 292–534 folds into the Glutamine amidotransferase type-1 domain; that stretch reads KIALVGKYVE…FVTAAIKNSN (243 aa). Residue Gly-354 participates in L-glutamine binding. The active-site Nucleophile; for glutamine hydrolysis is the Cys-381. Residues 382-385, Glu-405, and Arg-463 contribute to the L-glutamine site; that span reads LGMQ. Residues His-508 and Glu-510 contribute to the active site.

The protein belongs to the CTP synthase family. In terms of assembly, homotetramer.

The catalysed reaction is UTP + L-glutamine + ATP + H2O = CTP + L-glutamate + ADP + phosphate + 2 H(+). It catalyses the reaction L-glutamine + H2O = L-glutamate + NH4(+). The enzyme catalyses UTP + NH4(+) + ATP = CTP + ADP + phosphate + 2 H(+). The protein operates within pyrimidine metabolism; CTP biosynthesis via de novo pathway; CTP from UDP: step 2/2. Its activity is regulated as follows. Allosterically activated by GTP, when glutamine is the substrate; GTP has no effect on the reaction when ammonia is the substrate. The allosteric effector GTP functions by stabilizing the protein conformation that binds the tetrahedral intermediate(s) formed during glutamine hydrolysis. Inhibited by the product CTP, via allosteric rather than competitive inhibition. Functionally, catalyzes the ATP-dependent amination of UTP to CTP with either L-glutamine or ammonia as the source of nitrogen. Regulates intracellular CTP levels through interactions with the four ribonucleotide triphosphates. This chain is CTP synthase, found in Streptococcus pyogenes serotype M1.